The following is a 1139-amino-acid chain: Integrin alpha ina-1 (1139 aa).

The N-terminal stretch at 1-19 (MRECIISWTLLLCLSCVKS) is a signal peptide. Residues 20–1084 (FNLDVNAPIY…PTIGDSRPIP (1065 aa)) lie on the Extracellular side of the membrane. The stretch at 21-85 (NLDVNAPIYR…CDINTFYNGG (65 aa)) is one FG-GAP 1 repeat. N-linked (GlcNAc...) asparagine glycans are attached at residues Asn108 and Asn136. FG-GAP repeat units lie at residues 111 to 171 (RGRT…LQST), 180 to 231 (LPTT…IFDS), 242 to 302 (NGDM…SSSK), 307 to 370 (EDKF…QRKQ), 378 to 438 (HPPK…IEKF), and 448 to 510 (GNDL…MEKR). An N-linked (GlcNAc...) asparagine glycan is attached at Asn313. 4 N-linked (GlcNAc...) asparagine glycosylation sites follow: Asn580, Asn788, Asn851, and Asn1026. Residues 1085-1106 (WWIYVIAAVIGVLILSLIIICL) form a helical membrane-spanning segment. Topologically, residues 1107–1139 (SKCGFFKRNRLDQPSLYTAQLKHEREEWADTGL) are cytoplasmic.

The protein belongs to the integrin alpha chain family. As to quaternary structure, heterodimer of an alpha and a beta subunit. Alpha ina-1 associates with beta pat-3. Interacts (via cytoplasmic domain) with src-1 (when phosphorylated at 'Tyr-416').

It is found in the membrane. The protein localises to the cell projection. Its subcellular location is the phagocytic cup. It localises to the cytoplasmic vesicle. The protein resides in the phagosome membrane. In terms of biological role, plays a role in cell migration, axon fasciculation, and morphogenesis. During gonad morphogenesis, involved in distal tip cell (DTC)-mediated guidance of gonad elongation, in maintaining their sharp tapering morphology and in their migration. Involved in the anterior-posterior positioning of QR neuroblast descendants by regulating the migratory speed of QR.p. Probably by acting as a receptor for apoptotic cells, plays a role in the clearance of apoptotic cells during mid-embryogenesis. The polypeptide is Integrin alpha ina-1 (ina-1) (Caenorhabditis elegans).